A 367-amino-acid polypeptide reads, in one-letter code: Anthranilate phosphoribosyltransferase (367 aa).

Over residues 1-17 (MVLSSEASSAADHSAAA) the composition is skewed to low complexity. The disordered stretch occupies residues 1 to 22 (MVLSSEASSAADHSAAAPIPTS). 5-phospho-alpha-D-ribose 1-diphosphate contacts are provided by residues Gly104, 107–108 (GD), Thr112, 114–117 (NLST), 132–140 (KHGNRAASS), and Gly144. Gly104 serves as a coordination point for anthranilate. Ser116 lines the Mg(2+) pocket. Position 135 (Asn135) interacts with anthranilate. Arg190 contacts anthranilate. The Mg(2+) site is built by Asp248 and Glu249.

This sequence belongs to the anthranilate phosphoribosyltransferase family. Homodimer. Mg(2+) is required as a cofactor.

The enzyme catalyses N-(5-phospho-beta-D-ribosyl)anthranilate + diphosphate = 5-phospho-alpha-D-ribose 1-diphosphate + anthranilate. It functions in the pathway amino-acid biosynthesis; L-tryptophan biosynthesis; L-tryptophan from chorismate: step 2/5. Catalyzes the transfer of the phosphoribosyl group of 5-phosphorylribose-1-pyrophosphate (PRPP) to anthranilate to yield N-(5'-phosphoribosyl)-anthranilate (PRA). The chain is Anthranilate phosphoribosyltransferase from Mycobacterium marinum (strain ATCC BAA-535 / M).